The sequence spans 397 residues: Methylthioribose kinase (397 aa).

ATP is bound by residues asparagine 43, lysine 60, and 114 to 116 (EDL). Aspartate 232 is a substrate binding site. 249–251 (DPE) is a binding site for ATP. Arginine 340 contacts substrate.

Belongs to the methylthioribose kinase family. Homodimer.

The enzyme catalyses 5-(methylsulfanyl)-D-ribose + ATP = 5-(methylsulfanyl)-alpha-D-ribose 1-phosphate + ADP + H(+). The protein operates within amino-acid biosynthesis; L-methionine biosynthesis via salvage pathway; S-methyl-5-thio-alpha-D-ribose 1-phosphate from S-methyl-5'-thioadenosine (hydrolase route): step 2/2. Its function is as follows. Catalyzes the phosphorylation of methylthioribose into methylthioribose-1-phosphate. The protein is Methylthioribose kinase of Bacillus pumilus (strain SAFR-032).